A 301-amino-acid chain; its full sequence is F1 operon positive regulatory protein (301 aa).

Residues 8 to 107 enclose the HTH araC/xylS-type domain; the sequence is NSIIQYIEEN…GYTPRQYRMI (100 aa). DNA-binding regions (H-T-H motif) lie at residues 26–47 and 74–97; these read DCLV…KEYV and IIEI…KKIF.

In terms of biological role, positive regulator of F1 operon expression. This Yersinia pestis protein is F1 operon positive regulatory protein (caf1R).